The sequence spans 292 residues: Expansin-B11 (292 aa).

A signal peptide spans 1 to 27; that stretch reads MAKSCTLVLLLVALVGLSLLVSPIACS. A glycan (N-linked (GlcNAc...) asparagine) is linked at N51. The 111-residue stretch at 82–192 folds into the Expansin-like EG45 domain; sequence GGACGYQTAV…RRVPCKYSGV (111 aa). Disulfide bonds link C85-C114, C117-C187, and C122-C128. Residues 205 to 287 enclose the Expansin-like CBD domain; it reads FYFEVLIEFE…SWKPGVTYRS (83 aa).

Belongs to the expansin family. Expansin B subfamily. Expressed in internodes.

It is found in the secreted. The protein localises to the cell wall. It localises to the membrane. Functionally, may cause loosening and extension of plant cell walls by disrupting non-covalent bonding between cellulose microfibrils and matrix glucans. No enzymatic activity has been found. May be required for rapid internodal elongation in deepwater rice during submergence. In Oryza sativa subsp. japonica (Rice), this protein is Expansin-B11 (EXPB11).